The primary structure comprises 208 residues: Small ribosomal subunit protein uS4 (208 aa).

The 66-residue stretch at 98–163 (SRLDNVVYRA…LTPFVIARAV (66 aa)) folds into the S4 RNA-binding domain.

This sequence belongs to the universal ribosomal protein uS4 family. Part of the 30S ribosomal subunit. Contacts protein S5. The interaction surface between S4 and S5 is involved in control of translational fidelity.

Its function is as follows. One of the primary rRNA binding proteins, it binds directly to 16S rRNA where it nucleates assembly of the body of the 30S subunit. With S5 and S12 plays an important role in translational accuracy. The sequence is that of Small ribosomal subunit protein uS4 from Acidothermus cellulolyticus (strain ATCC 43068 / DSM 8971 / 11B).